The sequence spans 376 residues: Putative F-box protein At3g18330 (376 aa).

Positions 1-46 constitute an F-box domain; the sequence is MPMPNLPKELVEEILSFVPATYLKRLSATCKPWNRLIHNDKRFARK.

In Arabidopsis thaliana (Mouse-ear cress), this protein is Putative F-box protein At3g18330.